The primary structure comprises 469 residues: Glutamate--tRNA ligase (469 aa).

A 'HIGH' region motif is present at residues 9-19 (PSPTGMFHVGG). Residues Cys-100, Cys-102, Cys-122, and Asp-124 each coordinate Zn(2+). Residues 232 to 236 (KLSKR) carry the 'KMSKS' region motif. Lys-235 provides a ligand contact to ATP.

This sequence belongs to the class-I aminoacyl-tRNA synthetase family. Glutamate--tRNA ligase type 1 subfamily. In terms of assembly, monomer. Requires Zn(2+) as cofactor.

It localises to the cytoplasm. The enzyme catalyses tRNA(Glu) + L-glutamate + ATP = L-glutamyl-tRNA(Glu) + AMP + diphosphate. In terms of biological role, catalyzes the attachment of glutamate to tRNA(Glu) in a two-step reaction: glutamate is first activated by ATP to form Glu-AMP and then transferred to the acceptor end of tRNA(Glu). The chain is Glutamate--tRNA ligase from Salinispora arenicola (strain CNS-205).